A 462-amino-acid polypeptide reads, in one-letter code: MSTAAQCPPPRPGGGGGDTTLAALSAHMAPCRDTTPEQLAQLIDVHLGDLRQEQPNWTISSSTVAGRGVFATRDIAAGELIFQERALVTGPTARKGQLSSCICCHETLPQTGFLCRHRCTLPVCETCSDSEEHQAECEHFRRWQPKDVDAEQEQVNPMSLRILTAVRVFHLGKEQRHLVDAMQANAERAYRREIIQAAQCFRNFPTTDRVFMDQLFRIVGVLNTNAFEAPCRSGGHETLLRGLFPLTAIMNHECTPNASHYFENGRLAVVRAARDIPKGGEITTTYTKILWGNLTRNIFLKMTKHFACDCVRCHDNTENGTYLSALFCREQGCRGLVIPVQTRTLQPDWRCITCENVFPHAKMAKYQDFALNTINNRINSCSVQDMIHFINELCPRFCPSSNYVLIEAKLNVIWRMTRFDHEEYTPEEMGHMDRYREEVLAILHKLGAGECTLKKLITGEIQ.

Positions 55-287 (PNWTISSSTV…KGGEITTTYT (233 aa)) constitute an SET domain.

This sequence belongs to the class V-like SAM-binding methyltransferase superfamily.

This chain is SET domain-containing protein SmydA-8, isoform A, found in Drosophila melanogaster (Fruit fly).